The sequence spans 491 residues: Peptidyl-prolyl isomerase CWC27 (491 aa).

One can recognise a PPIase cyclophilin-type domain in the interval 11 to 167; it reads TNGKVIIDTT…IPPKIRRIHI (157 aa). Composition is skewed to basic and acidic residues over residues 186–202, 268–298, and 306–316; these read AQQK…EQRE, DLGK…REKA, and AEIKRMEEDLR. 2 disordered regions span residues 186-427 and 464-491; these read AQQK…IEVD and RDLL…GRNR. Positions 277–327 form a coiled coil; it reads ASEEKKAVDLKNIRAQHEREKAGGSAARQAEIKRMEEDLRRLKKRSGSVSD. Residues 323–333 show a composition bias toward low complexity; that stretch reads GSVSDSESDSS. A compositionally biased stretch (basic residues) spans 352–367; that stretch reads ASKRGRAAMKAGNKRG. 2 stretches are compositionally biased toward acidic residues: residues 391-406 and 418-427; these read DEPE…EGEA and AEEEGGIEVD. The segment covering 482-491 has biased composition (basic residues); that stretch reads RTVRNSGRNR.

This sequence belongs to the cyclophilin-type PPIase family. CWC27 subfamily. In terms of assembly, associated with the spliceosome.

The protein localises to the cytoplasm. It is found in the nucleus. The enzyme catalyses [protein]-peptidylproline (omega=180) = [protein]-peptidylproline (omega=0). Its function is as follows. PPIases accelerate the folding of proteins. It catalyzes the cis-trans isomerization of proline imidic peptide bonds in oligopeptides. Involved in pre-mRNA splicing. The polypeptide is Peptidyl-prolyl isomerase CWC27 (CWC27) (Cryptococcus neoformans var. neoformans serotype D (strain B-3501A) (Filobasidiella neoformans)).